A 310-amino-acid polypeptide reads, in one-letter code: Iron ABC transporter substrate-binding lipoprotein MtsA (310 aa).

The N-terminal stretch at 1-20 (MGKRMSLILGAFLSVFLLVA) is a signal peptide. The N-palmitoyl cysteine moiety is linked to residue cysteine 21. Residue cysteine 21 is the site of S-diacylglycerol cysteine attachment. Fe(2+) contacts are provided by histidine 68, histidine 140, glutamate 206, and aspartate 281.

Belongs to the bacterial solute-binding protein 9 family. Lipoprotein receptor antigen (Lrai) subfamily.

It is found in the cell membrane. In terms of biological role, part of the ATP-binding cassette (ABC) transport system MtsABC involved in iron import. Binds iron with high affinity and specificity and delivers it to the membrane permease for translocation into the cytoplasm. Has low affinity for Zn(2+) and Cu(2+). In Streptococcus pyogenes serotype M1, this protein is Iron ABC transporter substrate-binding lipoprotein MtsA (mtsA).